The primary structure comprises 245 residues: Adapter protein MecA (245 aa).

Belongs to the MecA family. As to quaternary structure, homodimer.

Enables the recognition and targeting of unfolded and aggregated proteins to the ClpC protease or to other proteins involved in proteolysis. The protein is Adapter protein MecA of Streptococcus pneumoniae (strain ATCC BAA-255 / R6).